The primary structure comprises 247 residues: uncharacterized protein (247 aa).

NAD(+) contacts are provided by Leu19, Asp38, Asp63, and Val64. Ser142 contributes to the substrate binding site. Residues Tyr155, Lys159, and Ser190 each coordinate NAD(+). Tyr155 (proton acceptor) is an active-site residue.

Belongs to the short-chain dehydrogenases/reductases (SDR) family.

This is an uncharacterized protein from Mycobacterium bovis (strain ATCC BAA-935 / AF2122/97).